Reading from the N-terminus, the 161-residue chain is Nucleotide-binding protein Mmc1_1670 (161 aa).

This sequence belongs to the YajQ family.

Its function is as follows. Nucleotide-binding protein. The sequence is that of Nucleotide-binding protein Mmc1_1670 from Magnetococcus marinus (strain ATCC BAA-1437 / JCM 17883 / MC-1).